The following is a 101-amino-acid chain: Urease subunit beta (101 aa).

Belongs to the urease beta subunit family. In terms of assembly, heterotrimer of UreA (gamma), UreB (beta) and UreC (alpha) subunits. Three heterotrimers associate to form the active enzyme.

The protein localises to the cytoplasm. The enzyme catalyses urea + 2 H2O + H(+) = hydrogencarbonate + 2 NH4(+). The protein operates within nitrogen metabolism; urea degradation; CO(2) and NH(3) from urea (urease route): step 1/1. In Dechloromonas aromatica (strain RCB), this protein is Urease subunit beta.